The sequence spans 154 residues: Superoxide dismutase [Cu-Zn] (154 aa).

Positions 47, 49, and 64 each coordinate Cu cation. Cys-58 and Cys-147 are oxidised to a cystine. Residues His-64, His-72, His-81, and Asp-84 each coordinate Zn(2+). His-121 lines the Cu cation pocket. Arg-144 is a substrate binding site.

This sequence belongs to the Cu-Zn superoxide dismutase family. In terms of assembly, homodimer. Cu cation is required as a cofactor. It depends on Zn(2+) as a cofactor.

Its subcellular location is the cytoplasm. It localises to the mitochondrion. It is found in the cell membrane. It carries out the reaction 2 superoxide + 2 H(+) = H2O2 + O2. Functionally, destroys radicals which are normally produced within the cells and which are toxic to biological systems. Destroys radicals produced by host defense mechanisms. This is Superoxide dismutase [Cu-Zn] from Cryptococcus neoformans var. grubii serotype A (strain H99 / ATCC 208821 / CBS 10515 / FGSC 9487) (Filobasidiella neoformans var. grubii).